The chain runs to 279 residues: Urease accessory protein UreD (279 aa).

This sequence belongs to the UreD family. In terms of assembly, ureD, UreF and UreG form a complex that acts as a GTP-hydrolysis-dependent molecular chaperone, activating the urease apoprotein by helping to assemble the nickel containing metallocenter of UreC. The UreE protein probably delivers the nickel.

Its subcellular location is the cytoplasm. Required for maturation of urease via the functional incorporation of the urease nickel metallocenter. This is Urease accessory protein UreD from Pseudomonas fluorescens (strain Pf0-1).